A 382-amino-acid polypeptide reads, in one-letter code: Nitric oxide reductase FlRd-NAD(+) reductase (382 aa).

The protein belongs to the FAD-dependent oxidoreductase family. FAD serves as cofactor.

The protein resides in the cytoplasm. The enzyme catalyses 2 reduced [nitric oxide reductase rubredoxin domain] + NAD(+) + H(+) = 2 oxidized [nitric oxide reductase rubredoxin domain] + NADH. The protein operates within nitrogen metabolism; nitric oxide reduction. Its function is as follows. One of at least two accessory proteins for anaerobic nitric oxide (NO) reductase. Reduces the rubredoxin moiety of NO reductase. The polypeptide is Nitric oxide reductase FlRd-NAD(+) reductase (Vibrio vulnificus (strain CMCP6)).